A 159-amino-acid chain; its full sequence is Transcriptional repressor NrdR (159 aa).

Positions 1–22 (MRCPFCGSEDTQVKDSRPAEDN) are disordered. Residues 3 to 34 (CPFCGSEDTQVKDSRPAEDNTSIRRRRICPDC) fold into a zinc finger. Residues 11–22 (TQVKDSRPAEDN) show a composition bias toward basic and acidic residues. Residues 49-139 (LMVIKKSGRK…VYRDFSHAED (91 aa)) enclose the ATP-cone domain.

The protein belongs to the NrdR family. Zn(2+) is required as a cofactor.

Negatively regulates transcription of bacterial ribonucleotide reductase nrd genes and operons by binding to NrdR-boxes. The polypeptide is Transcriptional repressor NrdR (Agrobacterium fabrum (strain C58 / ATCC 33970) (Agrobacterium tumefaciens (strain C58))).